Reading from the N-terminus, the 619-residue chain is Lateral signaling target protein 2 homolog (619 aa).

The segment at 501–561 (DSDCEQCTAC…VCNLCFLYKI (61 aa)) adopts an FYVE-type zinc-finger fold. 8 residues coordinate Zn(2+): Cys-507, Cys-510, Cys-523, Cys-526, Cys-531, Cys-534, Cys-553, and Cys-556. The segment at 598–619 (HERSQDGSQSNESPTATTATTI) is disordered. A compositionally biased stretch (polar residues) spans 603–619 (DGSQSNESPTATTATTI).

This sequence belongs to the lst-2 family.

In terms of biological role, negative regulator of epidermal growth factor receptor (EGFR) signaling. This chain is Lateral signaling target protein 2 homolog, found in Brugia malayi (Filarial nematode worm).